The primary structure comprises 828 residues: Hapless 2 (828 aa).

A signal peptide spans 1–32; that stretch reads MKNKLINLRSKHIYKLIIIIFFCIILKYYKWC. At 33–680 the chain is on the extracellular side; that stretch reads DFKNKVFFIQ…INTVKTLIGK (648 aa). C53 and C62 are joined by a disulfide. N74 carries N-linked (GlcNAc...) asparagine glycosylation. 4 disulfide bridges follow: C142-C209, C170-C381, C172-C191, and C363-C388. The tract at residues 174 to 191 is cd loop; involved in gamete fusion; it reads TYNYFKDDEFIKRAKLKC. N-linked (GlcNAc...) asparagine glycosylation is found at N233, N250, N264, N293, and N333. 4 N-linked (GlcNAc...) asparagine glycosylation sites follow: N479, N516, N531, and N539. Cysteines 546 and 592 form a disulfide. A helical membrane pass occupies residues 681–701; that stretch reads FAIIAILIILAPALIPLLPFF. The Cytoplasmic segment spans residues 702–828; it reads LNFFFLFIST…SGKSKIPPLR (127 aa). A disordered region spans residues 773 to 828; the sequence is RKNKKKFNKNNISSNIKHKKGGKKVKQKEPNRNSNHTSHEYADTSPSGKSKIPPLR. The segment covering 788–798 has biased composition (basic residues); the sequence is IKHKKGGKKVK. A compositionally biased stretch (basic and acidic residues) spans 799-814; sequence QKEPNRNSNHTSHEYA.

This sequence belongs to the HAP2/GCS1 family.

The protein localises to the cell membrane. In terms of biological role, during fertilization, required on male gametes for their fusion with female gametes, and for subsequent ookinete formation in the host. Thereby, required for mosquito-mediated transmission to other animals. Probably initiates the fusion of gamete cell membranes by inserting part of its extracellular domain into the cell membrane of a female gamete. The protein is Hapless 2 of Plasmodium berghei (strain Anka).